The primary structure comprises 313 residues: Acetyl-coenzyme A carboxylase carboxyl transferase subunit alpha (313 aa).

Residues 30–291 (DLDREISDLE…KMALLQELAF (262 aa)) enclose the CoA carboxyltransferase C-terminal domain.

This sequence belongs to the AccA family. Acetyl-CoA carboxylase is a heterohexamer composed of biotin carboxyl carrier protein (AccB), biotin carboxylase (AccC) and two subunits each of ACCase subunit alpha (AccA) and ACCase subunit beta (AccD).

The protein resides in the cytoplasm. It catalyses the reaction N(6)-carboxybiotinyl-L-lysyl-[protein] + acetyl-CoA = N(6)-biotinyl-L-lysyl-[protein] + malonyl-CoA. It participates in lipid metabolism; malonyl-CoA biosynthesis; malonyl-CoA from acetyl-CoA: step 1/1. Functionally, component of the acetyl coenzyme A carboxylase (ACC) complex. First, biotin carboxylase catalyzes the carboxylation of biotin on its carrier protein (BCCP) and then the CO(2) group is transferred by the carboxyltransferase to acetyl-CoA to form malonyl-CoA. This Zymomonas mobilis subsp. mobilis (strain ATCC 31821 / ZM4 / CP4) protein is Acetyl-coenzyme A carboxylase carboxyl transferase subunit alpha.